Reading from the N-terminus, the 177-residue chain is Neuroblastoma suppressor of tumorigenicity 1 (177 aa).

The N-terminal stretch at 1–16 is a signal peptide; that stretch reads MLWFVVGALFPALLLA. Intrachain disulfides connect C34–C84, C48–C98, C58–C117, C62–C119, and C81–C122. Positions 34-123 constitute a CTCK domain; the sequence is CEAKNITQIV…ILHCSCQACG (90 aa). Positions 143 to 177 are disordered; that stretch reads MPAEGPGPHHYAHHQQEVEEPPASSHHHHEEEGDE.

It belongs to the DAN family.

It localises to the secreted. Functionally, may act as a tumor suppressor. The protein is Neuroblastoma suppressor of tumorigenicity 1 (NBL1) of Gallus gallus (Chicken).